The sequence spans 225 residues: Thymidylate kinase (225 aa).

10-17 provides a ligand contact to ATP; it reads GPEGAGKT.

Belongs to the thymidylate kinase family.

The catalysed reaction is dTMP + ATP = dTDP + ADP. In terms of biological role, phosphorylation of dTMP to form dTDP in both de novo and salvage pathways of dTTP synthesis. This is Thymidylate kinase from Geobacillus thermodenitrificans (strain NG80-2).